We begin with the raw amino-acid sequence, 244 residues long: Meiotic drive suppressor wtf2 (244 aa).

Positions methionine 1–serine 10 are enriched in polar residues. The tract at residues methionine 1–aspartate 68 is disordered. Residues glutamate 17–proline 30 are compositionally biased toward basic and acidic residues. A run of 4 helical transmembrane segments spans residues phenylalanine 73–cysteine 93, tryptophan 110–phenylalanine 130, tryptophan 149–proline 169, and leucine 183–alanine 203.

Belongs to the WTF family. As to quaternary structure, homomer. Interacts with other proteins that exhibit high sequence similarity.

It localises to the spore membrane. Its subcellular location is the vacuole membrane. Its function is as follows. Acts as a suppressor component of the dual wtf meiotic drive system, and can suppress but not confer meiotic drive by compatible poisons. Wtf meiotic drive systems promote unequal transmission of alleles from the parental zygote to progeny spores by encoding a poison and an antidote from the same locus; the poison is trans-acting and forms toxic aggregates in all spores within an ascus, wherease the antidote is spore-specific and targets aggregates for degradation by the vacuole. Meiotic drive by wtf systems therefore lead to poisoning of all progeny that do not inherit the dual poison/antidote allele, or express a compatible antidote. This Schizosaccharomyces kambucha (Fission yeast) protein is Meiotic drive suppressor wtf2.